The chain runs to 116 residues: LQEIFRGVRKAVKSHGCKRAILVGHNSSFDLAFLNAAVARCDIKRNPFHPFSSFDTATLAGLAYGQTVLAKACQSAGIEFDGREAHSARYDTEKTAELFCGIVNRWKEMGGWVDFA.

The Exonuclease domain occupies 18-99 (KRAILVGHNS…YDTEKTAELF (82 aa)). Residue H86 is the Proton donor/acceptor of the active site.

It belongs to the RNase T family. In terms of assembly, homodimer.

Functionally, trims short 3' overhangs of a variety of RNA species, leaving a one or two nucleotide 3' overhang. Responsible for the end-turnover of tRNA: specifically removes the terminal AMP residue from uncharged tRNA (tRNA-C-C-A). Also appears to be involved in tRNA biosynthesis. In Azotobacter vinelandii, this protein is Ribonuclease T.